The primary structure comprises 133 residues: Profilin-2 (133 aa).

Cys13 and Cys117 are joined by a disulfide. The Involved in PIP2 interaction signature appears at 83–99 (AVIRGKKGSGGITIKKT). Thr113 is modified (phosphothreonine).

This sequence belongs to the profilin family. In terms of assembly, occurs in many kinds of cells as a complex with monomeric actin in a 1:1 ratio. Phosphorylated by MAP kinases.

It localises to the cytoplasm. The protein localises to the cytoskeleton. Functionally, binds to actin and affects the structure of the cytoskeleton. At high concentrations, profilin prevents the polymerization of actin, whereas it enhances it at low concentrations. The protein is Profilin-2 of Betula pendula (European white birch).